The following is a 2289-amino-acid chain: Protein Ycf2 (2289 aa).

An ATP-binding site is contributed by 1643 to 1650; the sequence is GSIGTGRS.

Belongs to the Ycf2 family.

Its subcellular location is the plastid. The protein localises to the chloroplast stroma. Probable ATPase of unknown function. Its presence in a non-photosynthetic plant (Epifagus virginiana) and experiments in tobacco indicate that it has an essential function which is probably not related to photosynthesis. This Capsella bursa-pastoris (Shepherd's purse) protein is Protein Ycf2.